A 409-amino-acid chain; its full sequence is Elongation factor Tu, cyanelle (409 aa).

The region spanning 10-214 (KPHVNIGTIG…AVDEYIPTPE (205 aa)) is the tr-type G domain. The segment at 19 to 26 (GHVDHGKT) is G1. 19–26 (GHVDHGKT) serves as a coordination point for GTP. T26 is a Mg(2+) binding site. The tract at residues 60 to 64 (GITIN) is G2. Residues 81–84 (DCPG) are G3. GTP contacts are provided by residues 81 to 85 (DCPGH) and 136 to 139 (NKED). The segment at 136 to 139 (NKED) is G4. Positions 174–176 (SAL) are G5.

Belongs to the TRAFAC class translation factor GTPase superfamily. Classic translation factor GTPase family. EF-Tu/EF-1A subfamily.

It is found in the plastid. It localises to the cyanelle. It carries out the reaction GTP + H2O = GDP + phosphate + H(+). Functionally, GTP hydrolase that promotes the GTP-dependent binding of aminoacyl-tRNA to the A-site of ribosomes during protein biosynthesis. The chain is Elongation factor Tu, cyanelle (tufA) from Cyanophora paradoxa.